The following is a 437-amino-acid chain: GTPase Obg (437 aa).

Residues 2–160 (SMFLDTAKIK…RNLELELKVL (159 aa)) form the Obg domain. In terms of domain architecture, OBG-type G spans 161–338 (ADVGLVGFPS…LLEATAELLE (178 aa)). GTP is bound by residues 167 to 174 (GFPSVGKS), 192 to 196 (FTTIV), 214 to 217 (DLPG), 284 to 287 (NKMD), and 319 to 321 (SGI). The Mg(2+) site is built by S174 and T194. The region spanning 359 to 437 (GFNPDEPEFA…IGKFEFEFVD (79 aa)) is the OCT domain.

This sequence belongs to the TRAFAC class OBG-HflX-like GTPase superfamily. OBG GTPase family. Monomer. Requires Mg(2+) as cofactor.

It localises to the cytoplasm. An essential GTPase which binds GTP, GDP and possibly (p)ppGpp with moderate affinity, with high nucleotide exchange rates and a fairly low GTP hydrolysis rate. Plays a role in control of the cell cycle, stress response, ribosome biogenesis and in those bacteria that undergo differentiation, in morphogenesis control. This chain is GTPase Obg, found in Streptococcus suis (strain 05ZYH33).